The chain runs to 429 residues: MSKSLQAIRGMNDILPEQSPLWRYFEGTVAGLLDTYGYSQIRTPIVEFTELFKRSIGEVTDIVEKEMYTFEDRNGDSLTLRPEGTAACVRAVLEHGITGNGQVQKLWYIGQMFRHERPQKGRYRQFHQIGVEVFNLDGPDIDAELIMLTWRLWGLLGIQDAVKLELNSLGTSEARARYRDALVEFLSARLEQLDEDSQRRLKSNPLRILDSKDPNTQAVLVGAPKLEDYLDEDSRVHFEGLKARLDAAGIPFVINTKLVRGLDYYSKTVFEWVTDKLGAQGTVCAGGRYDGLVEQMGGKPTTGVGFAMGIERLILLLETLGKVPASINRQIDVYLCAFGEQAELAGLRLSESLRDRLPGLRLAVNAGGGSFKSQFKKADKSGALFALILGDDELAKQEIGLKPLRGQGEQQNIAWDALAEHLETAIAQA.

This sequence belongs to the class-II aminoacyl-tRNA synthetase family. Homodimer.

Its subcellular location is the cytoplasm. It catalyses the reaction tRNA(His) + L-histidine + ATP = L-histidyl-tRNA(His) + AMP + diphosphate + H(+). In Pseudomonas putida (strain W619), this protein is Histidine--tRNA ligase.